Reading from the N-terminus, the 289-residue chain is N-acetylmuramoyl-L-alanine amidase AmiA (289 aa).

The tat-type signal signal peptide spans 1–34 (MSTFKLLKTLTSRRQVLKTGLAALTLSGMSHAVA). The interval 36 to 61 (EETLKTSNGHSKPKTKKTGSKRLVML) is disordered. Residues 46–55 (SKPKTKKTGS) are compositionally biased toward basic residues. One can recognise a MurNAc-LAA domain in the interval 59 to 273 (VMLDPGHGGI…IATAIANGII (215 aa)).

The protein belongs to the N-acetylmuramoyl-L-alanine amidase 3 family. Predicted to be exported by the Tat system. The position of the signal peptide cleavage has not been experimentally proven.

Its subcellular location is the periplasm. The catalysed reaction is Hydrolyzes the link between N-acetylmuramoyl residues and L-amino acid residues in certain cell-wall glycopeptides.. Functionally, cell-wall hydrolase involved in septum cleavage during cell division. In Salmonella typhimurium (strain LT2 / SGSC1412 / ATCC 700720), this protein is N-acetylmuramoyl-L-alanine amidase AmiA (amiA).